Here is a 310-residue protein sequence, read N- to C-terminus: 5-oxoprolinase subunit C (310 aa).

This sequence belongs to the PxpC family. In terms of assembly, forms a complex composed of PxpA, PxpB and PxpC.

The catalysed reaction is 5-oxo-L-proline + ATP + 2 H2O = L-glutamate + ADP + phosphate + H(+). In terms of biological role, catalyzes the cleavage of 5-oxoproline to form L-glutamate coupled to the hydrolysis of ATP to ADP and inorganic phosphate. The polypeptide is 5-oxoprolinase subunit C (Escherichia coli (strain K12)).